Consider the following 210-residue polypeptide: Ribosomal RNA large subunit methyltransferase E (210 aa).

Positions 60, 62, 85, 101, and 126 each coordinate S-adenosyl-L-methionine. The active-site Proton acceptor is the Lys-166.

This sequence belongs to the class I-like SAM-binding methyltransferase superfamily. RNA methyltransferase RlmE family.

The protein resides in the cytoplasm. The enzyme catalyses uridine(2552) in 23S rRNA + S-adenosyl-L-methionine = 2'-O-methyluridine(2552) in 23S rRNA + S-adenosyl-L-homocysteine + H(+). Specifically methylates the uridine in position 2552 of 23S rRNA at the 2'-O position of the ribose in the fully assembled 50S ribosomal subunit. This Bordetella pertussis (strain Tohama I / ATCC BAA-589 / NCTC 13251) protein is Ribosomal RNA large subunit methyltransferase E.